A 326-amino-acid chain; its full sequence is MVLEKKSALLEDLIKKCGGCAVVDGGFATQLEIHGAAINDPLWSAVSLIKNPELIKRVHMEYLEAGADIVVTSSYQATIPGFLSRGLSIEESESLLQKSVELAVEARDRFWEKVSKVSGHSYNRALVAASIGSYGAYLADGSEYSGHYGENVSLDKLKDFHRRRLQVLVEAGPDLLAFETIPNKLEAQACVELLEEEKVQIPAWICFTSVDGEKAPSGESFEECLEPLNKSNNIYAVGINCAPPQFIENLIRKFAKLTKKAIVVYPNSGEVWDGKAKQWLPSQCFGDDEFEMFATKWRDLGAKLIGGCCRTTPSTINAISRDLKRR.

The 315-residue stretch at 9-323 (LLEDLIKKCG…STINAISRDL (315 aa)) folds into the Hcy-binding domain. Zn(2+)-binding residues include cysteine 241, cysteine 308, and cysteine 309.

As to quaternary structure, monomer. Requires Zn(2+) as cofactor. As to expression, expressed predominantly in roots. Expressed in rosette leaves, cauline leaves and developing seeds.

It carries out the reaction S-methyl-L-methionine + L-homocysteine = 2 L-methionine + H(+). Its activity is regulated as follows. Strongly inhibited by methionine. In terms of biological role, catalyzes methyl transfer from S-methylmethionine (SMM) to adenosyl-L-homocysteine (AdoMet). SMM degradation (by HMT-1, HMT-2 and HMT-3) and biosynthesis (by MMT1) constitute the SMM cycle in plants, which is probably required to achieve short term control of AdoMet level. The polypeptide is Homocysteine S-methyltransferase 1 (HMT-1) (Arabidopsis thaliana (Mouse-ear cress)).